A 27-amino-acid chain; its full sequence is Agglutinin alpha chain (27 aa).

In terms of domain architecture, Jacalin-type lectin spans 1–27; it reads GKAFDDGAFTGIREINLSINKETAIGD.

It belongs to the jacalin lectin family. As to quaternary structure, tetramer of four alpha chains associated with two or four beta chains. In terms of processing, N-glycosylated.

In terms of biological role, D-galactose-specific lectin, binds the T-antigen structure Gal-beta1,3-GalNAc (Thomsen-Friedenreich-antigen-specific lectin). Potent and selective stimulant of distinct T- and B-cell functions. Shows a unique ability to specifically recognize IgA-1 from human serum. This Artocarpus tonkinensis protein is Agglutinin alpha chain.